The primary structure comprises 395 residues: MKVKVKHLQRFFSSDASGGIVLIIAAALAMVMANTSVTSGLYHSFLETPVQLRVGALEINKNMLLWINDALMAVFFLLIGLEVKRELIQGSLASRRQAVFPVIAALGGMIVPALVYLAFNAQDPVAREGWAIPAATDIAFALGVLALLGSRVPTALKIFLMALAIIDDLGAIVIIALFYTHDLSMLSLGVAAAAIAVLMALNLSGVRRTGIYILVGAVLWTAVLKSGVHATLAGVIVGFMIPLEEKHGKSPAKALEHVLHPWVAFMILPLFAFANAGVSLQGVTLAGLTSLLPLGIMAGLFIGKPLGISLFCWLALKLKWASLPEGTTCKQIMAVGILCGIGFTMSIFIATLAFGSVDPALINWAKLGILIGSVLSAVVGYLILRQRVTDTRLAV.

11 helical membrane-spanning segments follow: residues 11–31 (FFSSDASGGIVLIIAAALAMV), 63–83 (MLLWINDALMAVFFLLIGLEV), 99–119 (VFPVIAALGGMIVPALVYLAF), 129–149 (GWAIPAATDIAFALGVLALLG), 158–178 (IFLMALAIIDDLGAIVIIALF), 183–203 (LSMLSLGVAAAAIAVLMALNL), 223–243 (VLKSGVHATLAGVIVGFMIPL), 258–278 (VLHPWVAFMILPLFAFANAGV), 282–302 (GVTLAGLTSLLPLGIMAGLFI), 332–352 (IMAVGILCGIGFTMSIFIATL), and 364–384 (WAKLGILIGSVLSAVVGYLIL).

Belongs to the NhaA Na(+)/H(+) (TC 2.A.33) antiporter family.

The protein resides in the cell inner membrane. It catalyses the reaction Na(+)(in) + 2 H(+)(out) = Na(+)(out) + 2 H(+)(in). Its function is as follows. Na(+)/H(+) antiporter that extrudes sodium in exchange for external protons. This is Na(+)/H(+) antiporter NhaA 1 from Klebsiella pneumoniae subsp. pneumoniae (strain ATCC 700721 / MGH 78578).